The chain runs to 481 residues: Subtilisin-like protease 1 (481 aa).

The signal sequence occupies residues 1–19; the sequence is MGVFRFISISLAAVSAANA. The propeptide occupies 20-116; it reads AQILSMPHAQ…VEPDTIISVH (97 aa). The 82-residue stretch at 34–115 folds into the Inhibitor I9 domain; sequence SYIVMMKDDT…FVEPDTIISV (82 aa). In terms of domain architecture, Peptidase S8 spans 126–400; sequence SWGLARISSS…NVLINNGGAK (275 aa). Active-site charge relay system residues include Asp-158 and His-190. Residues 175–198 form a disordered region; the sequence is GSNQVNDGDDNDRSGHGTHTSGTM. A glycan (N-linked (GlcNAc...) asparagine) is linked at Asn-251. The interval 281-312 is disordered; the sequence is GNDNTDARSSSPASEPSVCTVGASAEDDSRSS. Residues 282–294 show a composition bias toward polar residues; the sequence is NDNTDARSSSPAS. Ser-345 acts as the Charge relay system in catalysis. A disordered region spans residues 379–455; sequence ASISDVGPGT…HPHTPFPGGD (77 aa). Pro residues predominate over residues 424-450; it reads PQQPAPGEPSTPAPAPMPPTPQHPHTP.

This sequence belongs to the peptidase S8 family.

Its subcellular location is the secreted. In terms of biological role, secreted subtilisin-like serine protease with keratinolytic activity that contributes to pathogenicity. The sequence is that of Subtilisin-like protease 1 (SUB1) from Arthroderma gypseum (strain ATCC MYA-4604 / CBS 118893) (Microsporum gypseum).